Reading from the N-terminus, the 306-residue chain is Pyridoxal 5'-phosphate synthase subunit PdxS (306 aa).

D36 is a binding site for D-ribose 5-phosphate. The active-site Schiff-base intermediate with D-ribose 5-phosphate is K93. Residue G165 coordinates D-ribose 5-phosphate. R177 is a D-glyceraldehyde 3-phosphate binding site. Residues G226 and 247–248 each bind D-ribose 5-phosphate; that span reads GS.

The protein belongs to the PdxS/SNZ family. In the presence of PdxT, forms a dodecamer of heterodimers.

It carries out the reaction aldehydo-D-ribose 5-phosphate + D-glyceraldehyde 3-phosphate + L-glutamine = pyridoxal 5'-phosphate + L-glutamate + phosphate + 3 H2O + H(+). It functions in the pathway cofactor biosynthesis; pyridoxal 5'-phosphate biosynthesis. Functionally, catalyzes the formation of pyridoxal 5'-phosphate from ribose 5-phosphate (RBP), glyceraldehyde 3-phosphate (G3P) and ammonia. The ammonia is provided by the PdxT subunit. Can also use ribulose 5-phosphate and dihydroxyacetone phosphate as substrates, resulting from enzyme-catalyzed isomerization of RBP and G3P, respectively. The protein is Pyridoxal 5'-phosphate synthase subunit PdxS of Nocardia farcinica (strain IFM 10152).